We begin with the raw amino-acid sequence, 306 residues long: Porphobilinogen deaminase (306 aa).

An S-(dipyrrolylmethanemethyl)cysteine modification is found at Cys-240.

It belongs to the HMBS family. In terms of assembly, monomer. Dipyrromethane serves as cofactor.

The enzyme catalyses 4 porphobilinogen + H2O = hydroxymethylbilane + 4 NH4(+). It participates in porphyrin-containing compound metabolism; protoporphyrin-IX biosynthesis; coproporphyrinogen-III from 5-aminolevulinate: step 2/4. In terms of biological role, tetrapolymerization of the monopyrrole PBG into the hydroxymethylbilane pre-uroporphyrinogen in several discrete steps. This chain is Porphobilinogen deaminase, found in Syntrophomonas wolfei subsp. wolfei (strain DSM 2245B / Goettingen).